The chain runs to 266 residues: Undecaprenyl-diphosphatase (266 aa).

8 consecutive transmembrane segments (helical) span residues 1–21 (MDTFQVIILALIQGLTEFLPI), 39–59 (QGLSFDVAVNTGSLLAVVMYF), 87–107 (WWIILATIPAVIVGFTAKGFI), 111–131 (LRNIEVIAATTIIFGLLLWWA), 144–164 (VGWKKALVIGLAQAMALIPGT), 183–203 (AAARFSFLMSVPVSLGAAILV), 218–238 (ALGLGIVVSFIAAYVCIHYFL), and 246–266 (MTPFVIYRLVLGAVLCGFIFL).

The protein belongs to the UppP family.

It localises to the cell inner membrane. It carries out the reaction di-trans,octa-cis-undecaprenyl diphosphate + H2O = di-trans,octa-cis-undecaprenyl phosphate + phosphate + H(+). Catalyzes the dephosphorylation of undecaprenyl diphosphate (UPP). Confers resistance to bacitracin. The chain is Undecaprenyl-diphosphatase from Shewanella piezotolerans (strain WP3 / JCM 13877).